A 253-amino-acid chain; its full sequence is Phosphoadenosine 5'-phosphosulfate reductase (253 aa).

The Nucleophile; cysteine thiosulfonate intermediate role is filled by Cys239.

It belongs to the PAPS reductase family. CysH subfamily.

The protein localises to the cytoplasm. The enzyme catalyses [thioredoxin]-disulfide + sulfite + adenosine 3',5'-bisphosphate + 2 H(+) = [thioredoxin]-dithiol + 3'-phosphoadenylyl sulfate. It participates in sulfur metabolism; hydrogen sulfide biosynthesis; sulfite from sulfate: step 3/3. Catalyzes the formation of sulfite from phosphoadenosine 5'-phosphosulfate (PAPS) using thioredoxin as an electron donor. This is Phosphoadenosine 5'-phosphosulfate reductase from Aliivibrio fischeri (strain MJ11) (Vibrio fischeri).